A 94-amino-acid polypeptide reads, in one-letter code: Non-specific lipid-transfer protein 1 (94 aa).

Disulfide bonds link Cys-4–Cys-53, Cys-14–Cys-30, Cys-31–Cys-76, and Cys-51–Cys-90.

Its function is as follows. Plant non-specific lipid-transfer proteins transfer phospholipids as well as galactolipids across membranes. May play a role in wax or cutin deposition in the cell walls of expanding epidermal cells and certain secretory tissues. This is Non-specific lipid-transfer protein 1 from Amaranthus hypochondriacus (Prince-of-Wales feather).